Reading from the N-terminus, the 246-residue chain is DNA repair protein RecO (246 aa).

It belongs to the RecO family.

In terms of biological role, involved in DNA repair and RecF pathway recombination. The sequence is that of DNA repair protein RecO from Alkaliphilus metalliredigens (strain QYMF).